We begin with the raw amino-acid sequence, 528 residues long: Protein HPH2 (528 aa).

Positions 1–13 (MQNAQIKSSSKGS) are enriched in low complexity. Disordered stretches follow at residues 1–52 (MQNA…STVE), 170–193 (AQQH…PSRS), 230–257 (ILPN…STQT), and 270–334 (ESSP…QSVA). Over residues 17–36 (GTDRNSKDGVEKRPLEDVKQ) the composition is skewed to basic and acidic residues. Low complexity-rich tracts occupy residues 283 to 296 (PSVA…VANP) and 308 to 332 (SFSQ…FSQS). Residues 505–521 (ALDIVFLIIIIVICYTF) traverse the membrane as a helical segment.

In terms of assembly, interacts with HPH1/FRT1. Phosphorylated by CDC28.

Its subcellular location is the endoplasmic reticulum membrane. Functionally, required for growth under high NaCl, alkaline pH and cell wall stress. This is Protein HPH2 (FRT2) from Saccharomyces cerevisiae (strain ATCC 204508 / S288c) (Baker's yeast).